Reading from the N-terminus, the 391-residue chain is Terminal nucleotidyltransferase 5C (391 aa).

This sequence belongs to the TENT family. As to quaternary structure, interacts with BCCIP and PABPC1; the interaction has no effect on TENT5C poly(A) polymerase function. Interacts with PLK4; this interaction leads to the TENT5C recruitment into the centrosome.

It is found in the nucleus. Its subcellular location is the cytoplasm. It localises to the cytoskeleton. The protein localises to the microtubule organizing center. The protein resides in the centrosome. It carries out the reaction RNA(n) + ATP = RNA(n)-3'-adenine ribonucleotide + diphosphate. In terms of biological role, catalyzes the transfer of one adenosine molecule from an ATP to an mRNA poly(A) tail bearing a 3'-OH terminal group and enhances mRNA stability and gene expression. Can also elongate RNA oligos ending with uridine molecule, provided that the sequence is adenosine-rich. Mainly targets mRNAs encoding endoplasmic reticulum-targeted protein. In Rattus norvegicus (Rat), this protein is Terminal nucleotidyltransferase 5C.